The following is a 147-amino-acid chain: Hordoindoline-B1 (147 aa).

Residues 1–19 form the signal peptide; that stretch reads MKTLFLLAILALVASTTFA. A propeptide spanning residues 20–28 is cleaved from the precursor; the sequence is QYSVGGGYN.

Five disulfide bonds are present. In terms of tissue distribution, found in endosperm and aleurone layer of developing kernels, but not in the embryo.

The protein localises to the membrane. It localises to the secreted. Its subcellular location is the extracellular space. In terms of biological role, acts as a membranotoxin, probably through its antibacterial and antifungal activities, contributing to the defense mechanism of the plant against predators. Forms monovalent cation-selective ion channels in membranes. Contributes to grain texture and hardness. This Hordeum vulgare (Barley) protein is Hordoindoline-B1 (HINB-1).